We begin with the raw amino-acid sequence, 276 residues long: Putative pyruvate, phosphate dikinase regulatory protein 2 (276 aa).

Residue 146–153 participates in ADP binding; the sequence is GVSRTSKT.

This sequence belongs to the pyruvate, phosphate/water dikinase regulatory protein family. PDRP subfamily.

The catalysed reaction is N(tele)-phospho-L-histidyl/L-threonyl-[pyruvate, phosphate dikinase] + ADP = N(tele)-phospho-L-histidyl/O-phospho-L-threonyl-[pyruvate, phosphate dikinase] + AMP + H(+). It catalyses the reaction N(tele)-phospho-L-histidyl/O-phospho-L-threonyl-[pyruvate, phosphate dikinase] + phosphate + H(+) = N(tele)-phospho-L-histidyl/L-threonyl-[pyruvate, phosphate dikinase] + diphosphate. Bifunctional serine/threonine kinase and phosphorylase involved in the regulation of the pyruvate, phosphate dikinase (PPDK) by catalyzing its phosphorylation/dephosphorylation. This is Putative pyruvate, phosphate dikinase regulatory protein 2 from Enterococcus faecalis (strain ATCC 700802 / V583).